Reading from the N-terminus, the 146-residue chain is Putative phosphotransferase enzyme IIA component YadI (146 aa).

Residues Met-1–Val-124 enclose the PTS EIIA type-4 domain. His-9 functions as the Tele-phosphohistidine intermediate in the catalytic mechanism.

It is found in the cytoplasm. The phosphoenolpyruvate-dependent sugar phosphotransferase system (sugar PTS), a major carbohydrate active -transport system, catalyzes the phosphorylation of incoming sugar substrates concomitantly with their translocation across the cell membrane. This Escherichia coli (strain K12) protein is Putative phosphotransferase enzyme IIA component YadI (yadI).